The primary structure comprises 1062 residues: MSTPSRFKKDKEIIAEYESQVKEIRAQLVEQQKCLEQQTEMRVQLLQDLQDFFRKKAEIETEYSRNLEKLAERFMAKTRSTKDHQQFKKDQNLLSPVNCWYLLLNQVRRESKDHATLSDIYLNNVIMRFMQISEDSTRMFKKSKEIAFQLHEDLMKVLNELYTVMKTYHMYHSESISAESKLKEAEKQEEKQIGRSGDPVFHIRLEERHQRRSSVKKIEKMKEKRQAKYSENKLKSIKARNEYLLTLEATNASVFKYYIHDLSDLIDCCDLGYHASLNRALRTYLSAEYNLETSRHEGLDIIENAVDNLEPRSDKQRFMEMYPAAFCPPMKFEFQSHMGDEVCQVSAQQPVQAELMLRNQQLQSRLATLKIESEEVKKTTEATLQTIQDMVTIEDYDVSECFQHSRSTESVKSTVSETYLSKPSIAKRRANQQETEQFYFMKLREFLEGSNLITKLQAKHDLLQRTLGEGHRAEYMTTSRGRRNSHARHQDSGQVIPLIVESCIRFINLYGLQHQGIFRVSGSQVEVNDIKNSFERGENPLSDEQSNHDINSVAGVLKLYFRGLENPLFPKERFTDLISCIRIDNLYERALHIRKLLLTLPRSVLIVMRYLFAFLNHLSQYSDENMMDPYNLAICFGPTLMPVPEIQDQVSCQAHVNEIVKTIIIHHETIFPDAKELDGPVYEKCMAGGDYCDSPYSEHGTLEEVDQDAGTEPHTSEDECEPIEAIAKFDYVGRSARELSFKKGASLLLYHRASEDWWEGRHNGIDGLVPHQYIVVQDMDDTFSDTLSQKADSEASSGPVTEDKSSSKDMNSPTDRHSDSYLARQRKRGEPPPPGRRPGRTSDGHCPLHPPHALSNSSIDLGSPNLASHPRGLLQNRGLNNDSPERRRRPGHGSLTNISRHDSLKKIDSPPIRRSTSSGQYTGFNDHKPLDPETIAQDIEETMNTALNELRELERQSTVKHAPDVVLDTLEQVKNSPTPATSTESLSPLHNVALRGSEPQIRRSTSSSSETMSTFKPMVAPRMGVQLKPPALRPKPAVLPKTNPTMGPAAPSQGPTDKSCTM.

Residues 19–314 (SQVKEIRAQL…AVDNLEPRSD (296 aa)) enclose the F-BAR domain. Residues 352–382 (QAELMLRNQQLQSRLATLKIESEEVKKTTEA) adopt a coiled-coil conformation. Phosphoserine is present on S416. One can recognise a Rho-GAP domain in the interval 481–671 (GRRNSHARHQ…TIIIHHETIF (191 aa)). The SH3 domain maps to 720 to 779 (CEPIEAIAKFDYVGRSARELSFKKGASLLLYHRASEDWWEGRHNGIDGLVPHQYIVVQDM). A compositionally biased stretch (polar residues) spans 785 to 799 (DTLSQKADSEASSGP). A disordered region spans residues 785-931 (DTLSQKADSE…TGFNDHKPLD (147 aa)). A phosphoserine mark is found at S812 and S894. Positions 899-908 (SRHDSLKKID) are enriched in basic and acidic residues. Phosphoserine is present on S909. The span at 914 to 923 (RSTSSGQYTG) shows a compositional bias: polar residues. Positions 933-960 (ETIAQDIEETMNTALNELRELERQSTVK) form a coiled coil. Residues 974–988 (KNSPTPATSTESLSP) are compositionally biased toward polar residues. Disordered stretches follow at residues 974–1013 (KNSP…ETMS) and 1028–1062 (KPPA…SCTM). The residue at position 976 (S976) is a Phosphoserine. T978 bears the Phosphothreonine mark. Over residues 1004–1013 (STSSSSETMS) the composition is skewed to low complexity. The residue at position 1009 (S1009) is a Phosphoserine. The span at 1053–1062 (QGPTDKSCTM) shows a compositional bias: polar residues.

As to quaternary structure, homodimer. Forms a heterooligomer with SRGAP2 and SRGAP3 through its F-BAR domain. Interacts with CDC42 and RHOA. Interacts with FASLG. Interacts (via SH3 domain) with ROBO1.

Functionally, GTPase-activating protein for RhoA and Cdc42 small GTPases. Together with CDC42 seems to be involved in the pathway mediating the repulsive signaling of Robo and Slit proteins in neuronal migration. SLIT2, probably through interaction with ROBO1, increases the interaction of SRGAP1 with ROBO1 and inactivates CDC42. The polypeptide is SLIT-ROBO Rho GTPase-activating protein 1 (Srgap1) (Mus musculus (Mouse)).